The chain runs to 94 residues: Large ribosomal subunit protein uL23 (94 aa).

This sequence belongs to the universal ribosomal protein uL23 family. As to quaternary structure, part of the 50S ribosomal subunit. Contacts protein L29, and trigger factor when it is bound to the ribosome.

One of the early assembly proteins it binds 23S rRNA. One of the proteins that surrounds the polypeptide exit tunnel on the outside of the ribosome. Forms the main docking site for trigger factor binding to the ribosome. This is Large ribosomal subunit protein uL23 from Latilactobacillus sakei subsp. sakei (strain 23K) (Lactobacillus sakei subsp. sakei).